Reading from the N-terminus, the 681-residue chain is Proton channel OTOP3 (681 aa).

Residues 1 to 25 show a composition bias toward basic and acidic residues; sequence MLSKEEPACRQFHSREKTWGNEHNG. Residues 1-26 form a disordered region; that stretch reads MLSKEEPACRQFHSREKTWGNEHNGK. Residues 1–112 lie on the Cytoplasmic side of the membrane; that stretch reads MLSKEEPACR…LHQRAKKTGR (112 aa). The helical transmembrane segment at 113-133 threads the bilayer; sequence LFSGLFGLNLMFLGGTVVSSV. Residues 134 to 143 are Extracellular-facing; that stretch reads ALSNKAVPER. The helical transmembrane segment at 144–166 threads the bilayer; the sequence is DSQSFLCILMLLSSVWALYHLLF. Topologically, residues 167–182 are cytoplasmic; that stretch reads IRNQNGAVHHDHHAGA. The helical transmembrane segment at 183 to 204 threads the bilayer; sequence MWLKASLAIFGVCSIILSIFEI. The Extracellular portion of the chain corresponds to 205–216; that stretch reads GHALLLQNCEIL. A helical transmembrane segment spans residues 217–240; sequence MDIVFFSIEIVFVSVQTVLLWVSC. Over 241 to 248 the chain is Cytoplasmic; sequence KDCVQMHH. Residues 249–271 traverse the membrane as a helical segment; that stretch reads SVTRYGIMLTLATDILLWLTAVI. Residues 272–317 lie on the Extracellular side of the membrane; sequence DDSLEQDLEILQSNSTQDESNEMAQCQCPTDSMCWGLKQGYVTMFP. The chain crosses the membrane as a helical span at residues 318-334; sequence FNIEYSLICATLLFIMW. Residues 335–358 are Cytoplasmic-facing; that stretch reads KNVGRREKLHSDPPRHTFQLRGII. A helical membrane pass occupies residues 359-378; that stretch reads YGPLIGGAALLVGISVFVQY. Residues 379–392 lie on the Extracellular side of the membrane; that stretch reads QVEATSGMVSILSY. The helical transmembrane segment at 393 to 415 threads the bilayer; the sequence is HMYYGYKMIILAPMIVCSVAGII. Residues 416–507 lie on the Cytoplasmic side of the membrane; that stretch reads AHSLREKEKK…QGKMKNYTRK (92 aa). Residues 508–529 traverse the membrane as a helical segment; it reads LDVTLLFVSAVGQLGISYFSII. At 530–540 the chain is on the extracellular side; that stretch reads ATVVTTPWTML. A helical membrane pass occupies residues 541 to 563; the sequence is SALNFSNSLLLILQYLSQTMFII. Topologically, residues 564-614 are cytoplasmic; the sequence is ESMRSIHEEEKEKPGHHEESHRRMSVQEMHKAPPSCLDAGHLGLSRRVVKE. Residues 615–632 form a helical membrane-spanning segment; it reads MAMFLMICNIMCWILGAF. The Extracellular segment spans residues 633–651; it reads GAHPLYMNGLERQLYGSGI. Residues 652–674 form a helical membrane-spanning segment; it reads WLAILNIGLPLSVFYRMHSVGIL. The Cytoplasmic segment spans residues 675 to 681; that stretch reads LEVYLHA.

Belongs to the otopetrin family. As to quaternary structure, homodimer.

It is found in the cell membrane. It carries out the reaction H(+)(in) = H(+)(out). PH regulates the proton channel activity from both sides of the plasma membrane. Low pH activates the channel from the extracellular side but inactivates the channel on the intracellular side. Zn(2+) and Ca(2+) can partially block the channel. In terms of biological role, proton-selective channel gated by extracellular protons. This Xenopus tropicalis (Western clawed frog) protein is Proton channel OTOP3 (otop3).